The sequence spans 555 residues: Wee1-like protein kinase 2 (555 aa).

The interval 1-112 (MADTETDQGL…NFSTPKNSLG (112 aa)) is disordered. Ser15 carries the phosphoserine; by CaMK2 and PKA modification. Residues 26–41 (EGQMTAQDIGGAQSQK) show a composition bias toward polar residues. Positions 57-72 (TRDELHTSLSRDKESP) are enriched in basic and acidic residues. At Ser71 the chain carries Phosphoserine. The span at 102 to 112 (TNFSTPKNSLG) shows a compositional bias: polar residues. Residues 167 to 169 (KRK) carry the Nuclear localization signal motif. The Protein kinase domain maps to 208 to 485 (FFEIEKIGVG…ARSRILWPFL (278 aa)). ATP contacts are provided by residues 214–222 (IGVGEFGTV) and Lys237. Residues 310–324 (KLKDILLQISLGLKY) carry the Nuclear export signal motif. The Proton acceptor role is filled by Asp334. Residues Asn339 and Asp375 each coordinate Mg(2+). The stretch at 488-514 (TDELQKQLNLEKSKTATLKRELKKARH) forms a coiled coil.

This sequence belongs to the protein kinase superfamily. Ser/Thr protein kinase family. WEE1 subfamily. Phosphorylated by PKA at Ser-15 in vitro, leading to activate kinase activity. Phosphorylation at Ser-15 by CaMK2, leading to increase its activity and promote metaphase II exit during egg activation. As to expression, ovary-specific.

It localises to the cytoplasm. It is found in the nucleus. It catalyses the reaction L-tyrosyl-[protein] + ATP = O-phospho-L-tyrosyl-[protein] + ADP + H(+). Its function is as follows. Oocyte-specific protein tyrosine kinase that phosphorylates and inhibits CDK1 and acts as a key regulator of meiosis during both prophase I and metaphase II. Required to maintain meiotic arrest in oocytes during the germinal vesicle (GV) stage, a long period of quiescence at dictyate prophase I, by phosphorylating CDK1 at 'Tyr-15', leading to inhibit CDK1 activity and prevent meiotic reentry. Also required for metaphase II exit during egg activation by phosphorylating CDK1 at 'Tyr-15', to ensure exit from meiosis in oocytes and promote pronuclear formation. This Mus musculus (Mouse) protein is Wee1-like protein kinase 2 (Wee2).